A 259-amino-acid chain; its full sequence is Binding partner of ACD11 1 (259 aa).

Positions 6–77 constitute an RRM domain; the sequence is RSVKVGNLSS…QSVIIELAPN (72 aa). The interval 219–259 is disordered; it reads GEVGQKTKEKVEAEQPSQPAQSQQQLPEGYSPIHSSEYSKN. Residues 232-243 show a composition bias toward low complexity; it reads EQPSQPAQSQQQ.

In terms of assembly, interacts with ACD11, PR1F2 and PR1F3.

The protein resides in the cytoplasm. The protein localises to the membrane. This Arabidopsis thaliana (Mouse-ear cress) protein is Binding partner of ACD11 1 (BPA1).